Here is a 126-residue protein sequence, read N- to C-terminus: Aspartate 1-decarboxylase (126 aa).

Catalysis depends on serine 25, which acts as the Schiff-base intermediate with substrate; via pyruvic acid. At serine 25 the chain carries Pyruvic acid (Ser). Threonine 57 provides a ligand contact to substrate. The Proton donor role is filled by tyrosine 58. Residue 73-75 (GAA) participates in substrate binding.

Belongs to the PanD family. In terms of assembly, heterooctamer of four alpha and four beta subunits. The cofactor is pyruvate. Post-translationally, is synthesized initially as an inactive proenzyme, which is activated by self-cleavage at a specific serine bond to produce a beta-subunit with a hydroxyl group at its C-terminus and an alpha-subunit with a pyruvoyl group at its N-terminus.

The protein localises to the cytoplasm. The catalysed reaction is L-aspartate + H(+) = beta-alanine + CO2. It participates in cofactor biosynthesis; (R)-pantothenate biosynthesis; beta-alanine from L-aspartate: step 1/1. In terms of biological role, catalyzes the pyruvoyl-dependent decarboxylation of aspartate to produce beta-alanine. The sequence is that of Aspartate 1-decarboxylase from Proteus mirabilis (strain HI4320).